The chain runs to 119 residues: Non-specific lipid-transfer protein 11 (119 aa).

The N-terminal stretch at 1-28 (MRNITTTTRKMLLLVITILLGIAYHGEA) is a signal peptide. Cystine bridges form between Cys-31-Cys-78, Cys-41-Cys-55, Cys-56-Cys-101, and Cys-76-Cys-115.

Belongs to the plant LTP family.

Plant non-specific lipid-transfer proteins transfer phospholipids as well as galactolipids across membranes. May play a role in wax or cutin deposition in the cell walls of expanding epidermal cells and certain secretory tissues. In Arabidopsis thaliana (Mouse-ear cress), this protein is Non-specific lipid-transfer protein 11 (LTP11).